Reading from the N-terminus, the 274-residue chain is Dermonecrotic toxin SdSicTox-betaIIB1bix (274 aa).

His-5 is an active-site residue. Glu-25 and Asp-27 together coordinate Mg(2+). The Nucleophile role is filled by His-41. 2 cysteine pairs are disulfide-bonded: Cys-45–Cys-51 and Cys-47–Cys-190. A Mg(2+)-binding site is contributed by Asp-85.

The protein belongs to the arthropod phospholipase D family. Class II subfamily. Mg(2+) serves as cofactor. In terms of tissue distribution, expressed by the venom gland.

It is found in the secreted. It carries out the reaction an N-(acyl)-sphingosylphosphocholine = an N-(acyl)-sphingosyl-1,3-cyclic phosphate + choline. It catalyses the reaction an N-(acyl)-sphingosylphosphoethanolamine = an N-(acyl)-sphingosyl-1,3-cyclic phosphate + ethanolamine. The catalysed reaction is a 1-acyl-sn-glycero-3-phosphocholine = a 1-acyl-sn-glycero-2,3-cyclic phosphate + choline. The enzyme catalyses a 1-acyl-sn-glycero-3-phosphoethanolamine = a 1-acyl-sn-glycero-2,3-cyclic phosphate + ethanolamine. In terms of biological role, dermonecrotic toxins cleave the phosphodiester linkage between the phosphate and headgroup of certain phospholipids (sphingolipid and lysolipid substrates), forming an alcohol (often choline) and a cyclic phosphate. This toxin acts on sphingomyelin (SM). It may also act on ceramide phosphoethanolamine (CPE), lysophosphatidylcholine (LPC) and lysophosphatidylethanolamine (LPE), but not on lysophosphatidylserine (LPS), and lysophosphatidylglycerol (LPG). It acts by transphosphatidylation, releasing exclusively cyclic phosphate products as second products. Induces dermonecrosis, hemolysis, increased vascular permeability, edema, inflammatory response, and platelet aggregation. This is Dermonecrotic toxin SdSicTox-betaIIB1bix from Sicarius cf. damarensis (strain GJB-2008) (Six-eyed sand spider).